Here is a 141-residue protein sequence, read N- to C-terminus: uncharacterized protein (141 aa).

The 129-residue stretch at valine 13–lysine 141 folds into the Ferritin-like diiron domain. Fe cation-binding residues include glutamate 63, histidine 66, glutamate 125, and histidine 128.

This is an uncharacterized protein from Methanocaldococcus jannaschii (strain ATCC 43067 / DSM 2661 / JAL-1 / JCM 10045 / NBRC 100440) (Methanococcus jannaschii).